The chain runs to 208 residues: Apoptosis inhibitor 193R (208 aa).

The tract at residues 1 to 25 (MDTCGIYNSDNEEFSQENDGENDGG) is disordered. Positions 10–23 (DNEEFSQENDGEND) are enriched in acidic residues. The BIR repeat unit spans residues 37 to 108 (YDERLNSFQN…QDLKINCLFV (72 aa)). Zn(2+) is bound by residues cysteine 74, cysteine 77, histidine 94, and cysteine 105. A run of 3 repeats spans residues 134–139 (NQDLDH), 140–145 (NQDLDH), and 146–151 (NQDLDQ). The interval 134 to 151 (NQDLDHNQDLDHNQDLDQ) is 3 X 6 AA tandem repeats. The segment at 163–197 (CKICFTNKITKVLIPCGHSSCYECVFKLQTCPICK) adopts an RING-type zinc-finger fold.

The protein belongs to the IIV-6 193R family.

Plays a role early in infection by preventing host cell apoptosis. The chain is Apoptosis inhibitor 193R from Invertebrate iridescent virus 6 (IIV-6).